We begin with the raw amino-acid sequence, 421 residues long: UDP-N-acetylglucosamine 1-carboxyvinyltransferase (421 aa).

Lys23–Asn24 is a binding site for phosphoenolpyruvate. Arg92 is a UDP-N-acetyl-alpha-D-glucosamine binding site. Catalysis depends on Cys116, which acts as the Proton donor. At Cys116 the chain carries 2-(S-cysteinyl)pyruvic acid O-phosphothioketal. Residues Arg121 to Leu125, Lys161 to Val164, Asp306, and Ile328 each bind UDP-N-acetyl-alpha-D-glucosamine.

It belongs to the EPSP synthase family. MurA subfamily.

The protein localises to the cytoplasm. It carries out the reaction phosphoenolpyruvate + UDP-N-acetyl-alpha-D-glucosamine = UDP-N-acetyl-3-O-(1-carboxyvinyl)-alpha-D-glucosamine + phosphate. It functions in the pathway cell wall biogenesis; peptidoglycan biosynthesis. Its function is as follows. Cell wall formation. Adds enolpyruvyl to UDP-N-acetylglucosamine. This is UDP-N-acetylglucosamine 1-carboxyvinyltransferase from Vibrio campbellii (strain ATCC BAA-1116).